The chain runs to 418 residues: L-glutamine:2-deoxy-scyllo-inosose aminotransferase (418 aa).

The residue at position 192 (Lys-192) is an N6-(pyridoxal phosphate)lysine.

It belongs to the DegT/DnrJ/EryC1 family. L-glutamine:2-deoxy-scyllo-inosose/scyllo-inosose aminotransferase subfamily. It depends on pyridoxal 5'-phosphate as a cofactor.

The enzyme catalyses 2-deoxy-L-scyllo-inosose + L-glutamine = 2-deoxy-scyllo-inosamine + 2-oxoglutaramate. The catalysed reaction is 3-amino-2,3-dideoxy-scyllo-inosose + L-glutamine = 2-deoxystreptamine + 2-oxoglutaramate. The protein operates within metabolic intermediate biosynthesis; 2-deoxystreptamine biosynthesis; 2-deoxystreptamine from D-glucose 6-phosphate: step 2/4. It functions in the pathway metabolic intermediate biosynthesis; 2-deoxystreptamine biosynthesis; 2-deoxystreptamine from D-glucose 6-phosphate: step 4/4. Its pathway is antibiotic biosynthesis; butirosin biosynthesis. Catalyzes the PLP-dependent transamination of 2-deoxy-scyllo-inosose (2-DOI) to form 2-deoxy-scyllo-inosamine (2-DOIA) using L-glutamine as the amino donor. Also catalyzes the transamination of 3-amino-2,3-dideoxy-scyllo-inosose (keto-2-DOIA) into 2-deoxystreptamine (2-DOS). The polypeptide is L-glutamine:2-deoxy-scyllo-inosose aminotransferase (btrR) (Niallia circulans (Bacillus circulans)).